The primary structure comprises 261 residues: 5'-nucleotidase SurE (261 aa).

A divalent metal cation-binding residues include Asp12, Asp13, Ser43, and Asn100.

This sequence belongs to the SurE nucleotidase family. A divalent metal cation is required as a cofactor.

The protein localises to the cytoplasm. The catalysed reaction is a ribonucleoside 5'-phosphate + H2O = a ribonucleoside + phosphate. Nucleotidase that shows phosphatase activity on nucleoside 5'-monophosphates. The protein is 5'-nucleotidase SurE of Protochlamydia amoebophila (strain UWE25).